The primary structure comprises 69 residues: DNA-directed RNA polymerase subunit epsilon (69 aa).

This sequence belongs to the RNA polymerase subunit epsilon family. In terms of assembly, monomer. RNAP is composed of a core of 2 alpha, a beta and a beta' subunit. The core is associated with a delta subunit, and at least one of epsilon or omega. When a sigma factor is associated with the core the holoenzyme is formed, which can initiate transcription.

The protein resides in the cytoplasm. It localises to the nucleoid. The catalysed reaction is RNA(n) + a ribonucleoside 5'-triphosphate = RNA(n+1) + diphosphate. Functionally, a non-essential component of RNA polymerase (RNAP). Has a similar structure to bacteriophage T7 protein Gp2 (AC P03704), which is known to bind to RNAP in the DNA binding-cleft. Unlike Gp2 however, this protein does not inhibit transcription initiation. In vitro reconstitution experiments show this subunit is dispensible. This is DNA-directed RNA polymerase subunit epsilon from Bacillus subtilis (strain 168).